Here is a 175-residue protein sequence, read N- to C-terminus: MGRTLESKKQIVEELKALLDQAEMALVIDYQGLTIKEMSDLRTRLGPSSGICKVTKNTLMRKAIDGDTSWSSLESLLNGTNAFVLVKGDVGGALKAVQAFQKETKKSKTKGGLFEGKLLSQDEIKAIANLPTKEVLMAQIAGALNSIATKMAVGINEVPSGLARSLKQHADSGEN.

This sequence belongs to the universal ribosomal protein uL10 family. Part of the ribosomal stalk of the 50S ribosomal subunit. The N-terminus interacts with L11 and the large rRNA to form the base of the stalk. The C-terminus forms an elongated spine to which L12 dimers bind in a sequential fashion forming a multimeric L10(L12)X complex.

Functionally, forms part of the ribosomal stalk, playing a central role in the interaction of the ribosome with GTP-bound translation factors. This chain is Large ribosomal subunit protein uL10, found in Prochlorococcus marinus (strain MIT 9211).